A 181-amino-acid chain; its full sequence is Methanesulfonate monooxygenase hydroxylase subunit beta (181 aa).

This sequence belongs to the bacterial ring-hydroxylating dioxygenase beta subunit family. The MSA monooxygenase system consists of 4 proteins: the 2 subunits of the hydroxylase component (MsmA and MsmB), a ferredoxin (MsmC) and a ferredoxin reductase (MsmD). The hydroxylase component consists of a 3 alpha (MsmA) and 3 beta (MsmB) subunits.

The protein resides in the cytoplasm. It catalyses the reaction methanesulfonate + NADH + O2 = sulfite + formaldehyde + NAD(+) + H2O. With respect to regulation, MSAMO is inhibited by metal chelators (such as bathophenanthroline, bathocuprione, neocuprione, alpha-alpha-dipyridil and sodium EDTA) and by sodium azide, sodium arsenate and potassium cyanide. Methanesulfonate monooxygenase (MSAMO) mediates the primary degradation of methanesulfonic acid (MSA) to produce formaldehyd and inorganic sulfite by initial hydroxylation of the carbon atom prior to spontaneous cleavage of the unstable hydroxymethanesulfonic acid. MSAMO has a restricted substrate range that includes only the short-chain aliphatic sulfonates (methane- to butanesulfonate) and excludes all larger molecules, such as arylsulfonates and aromatic sulfonates. All MSAMO components are required for enzyme activity. The chain is Methanesulfonate monooxygenase hydroxylase subunit beta from Methylosulfonomonas methylovora.